The chain runs to 535 residues: CTP synthase (535 aa).

Residues methionine 1–leucine 267 form an amidoligase domain region. Residue serine 13 coordinates CTP. Position 13 (serine 13) interacts with UTP. Residue serine 14–isoleucine 19 coordinates ATP. An L-glutamine-binding site is contributed by tyrosine 54. Aspartate 71 contributes to the ATP binding site. Aspartate 71 and glutamate 141 together coordinate Mg(2+). CTP is bound by residues aspartate 148 to glutamate 150, lysine 188 to glutamine 193, and lysine 224. Residues lysine 188–glutamine 193 and lysine 224 each bind UTP. Arginine 240–alanine 242 is an ATP binding site. Positions lysine 292 to serine 534 constitute a Glutamine amidotransferase type-1 domain. Glycine 354 lines the L-glutamine pocket. Cysteine 381 functions as the Nucleophile; for glutamine hydrolysis in the catalytic mechanism. Residues leucine 382–glutamine 385, glutamate 405, and arginine 462 each bind L-glutamine. Catalysis depends on residues histidine 507 and glutamate 509.

Belongs to the CTP synthase family. Homotetramer.

The enzyme catalyses UTP + L-glutamine + ATP + H2O = CTP + L-glutamate + ADP + phosphate + 2 H(+). The catalysed reaction is L-glutamine + H2O = L-glutamate + NH4(+). It catalyses the reaction UTP + NH4(+) + ATP = CTP + ADP + phosphate + 2 H(+). It participates in pyrimidine metabolism; CTP biosynthesis via de novo pathway; CTP from UDP: step 2/2. Allosterically activated by GTP, when glutamine is the substrate; GTP has no effect on the reaction when ammonia is the substrate. The allosteric effector GTP functions by stabilizing the protein conformation that binds the tetrahedral intermediate(s) formed during glutamine hydrolysis. Inhibited by the product CTP, via allosteric rather than competitive inhibition. In terms of biological role, catalyzes the ATP-dependent amination of UTP to CTP with either L-glutamine or ammonia as the source of nitrogen. Regulates intracellular CTP levels through interactions with the four ribonucleotide triphosphates. In Bacillus cereus (strain AH820), this protein is CTP synthase.